We begin with the raw amino-acid sequence, 1149 residues long: APSYRVRRTDISGHAEEAVVNAANAKGTVGDGVCRAVARKWPDSFKGAATPVGTAKLVQANGMNVIHAVGPNFSTVTEAEGDRELAAAYRAVAGIINASNIKSVAIPLLSTGVFSGGKDRVMQSLNHLFTAMDTTDADVVIYCRDKAWEKKIQEAIDRRTAVELVSEDISLESDLIRVHPDSCLVGRKGYSITDGKLHSYLEGTRFHQTAVDMAEISTLWPKLQDANEQICLYALGESMDSIRTKCPVEDADSSTPPKTVPCLCRYAMTAERVARLRMNNTKAIIVCSSFPLPKYRIEGVQKVKCDRVLIFDQTVPSLVSPRKYIPAAASTHADTVSLDSTVSTGSAWSFPSEATYETMEVVAEVHHSEPPVPPPRRRRAQVTMHHQELLEVSDMHTPIAARVEIPVYDTAVVVERVAIPCTSEYAKPIPAPRAARVVPVPAPRIQRASTYRVSPTPTPRVLRASVCSVTTSAGVEFPWAPEDLEVLTEPVHCKMREPVELPWEPEDVDIQFGDFETSDKIQFGDIDFDQFXLGRAGAYIFSSDTGPGHLQQKSVRQHALPCEMLYVHEEERTYPPALDEAREKLLQAKMQMAPTEANKSRYQSRKVENMKAVIIDRLKDGARTYLTEQSEKIPTYVSKYPRPVYSPSVEDSLQNPEVAVAACNAFLEANYPTVASYQITDEYDAYLDMVDGSESCLDRATFCPAKLRCYPKHHAYHQPQVRSAVPSPFQNTLQNVLAAATKRNCNVTQMRELPTLDSAVLNVECFKKFACNGEYWQEFKDNPIRITTENITTYVTRLKGPKAAALFAKTHNLVPLQEVPMDRFVVDMKRDVKVTPGTKHTEERPKVQVIQAAEPLATAYLCGIHRELVRRLKAVLAPNIHTLFDMSAEDFDAIIAAHFQPGDAVLETDIASFDKSQDDSLALTALMLLEDLGVDQELLDLIEAAFGEITSVHLPTGTRFKFGAMMKSGMFLTLFVNTLLNIVIACRVLREKLTNSVCAAFIGDDNIVHGVRSDPLMAERCASWVNMEVKIIDATMCEKPPYFCGGFILYDKVTGSACRVADPLKRLFKLGKPLPAGDTQDEDRRRALKDETDRWARVGLKSELEIALSSRYEVNGTGNIVRAMATLAKSLKNFKKLRGPIVHLYGGPK.

In terms of domain architecture, Macro spans 1 to 160 (APSYRVRRTD…KIQEAIDRRT (160 aa)). Residues Asp-10, Asn-24, Gly-32, Gly-112, Val-113, and Phe-114 each contribute to the ADP-D-ribose site. 4 residues coordinate Zn(2+): Cys-262, Cys-264, Cys-287, and Cys-305. At Thr-344 the chain carries Phosphothreonine; by host. Short sequence motifs (FGDF; binding to host G3BP1) lie at residues 512–515 (FGDF) and 523–526 (FGDI). A RdRp catalytic domain is found at 903–1018 (DAVLETDIAS…HGVRSDPLMA (116 aa)).

Interacts with mRNA-capping enzyme nsP1. Interacts with host DDX1. RNA-directed Interacts with host DDX3. Interacts (via C-terminus) with host G3BP1; this interaction inhibits the formation of host stress granules on viral mRNAs and the nsp3-G3BP1 complexes bind viral RNAs and probably orchestrate the assembly of viral replication complexes. Interacts (via C-terminus) with host G3BP2; this interaction inhibits the formation of host stress granules on viral mRNAs and the nsp3-G3BP2 complexes bind viral RNAs and probably orchestrate the assembly of viral replication complexes. In terms of assembly, interacts with itself. Interacts with mRNA-capping enzyme nsP1. Interacts with protease nsP2. Interacts with itself. Mg(2+) serves as cofactor. Mn(2+) is required as a cofactor. Polyprotein P1234: Specific enzymatic cleavages in vivo yield mature proteins. The processing of the polyprotein is temporally regulated. In early stages (1.7 hpi), P1234 is first cleaved in trans through its nsP2 protease activity, releasing P123' and nsP4, which associate to form the early replication complex. At the same time, P1234 is also cut at the nsP1/nsP2 site early in infection but with lower efficiency. After replication of the viral minus-strand RNAs (4 hpi), the polyproteins are cut at the nsP1/nsP2 and nsP2/nsP3 sites very efficiently, preventing accumulation of P123' and P1234 and allowing the formation of the late replication complex. NsP3'/nsP4 site is not cleaved anymore and P34 is produced rather than nsP4. In terms of processing, specific enzymatic cleavages in vivo yield mature proteins. The processing of the polyprotein is temporally regulated. In early stages (1.7 hpi), P123 is cleaved at the nsP1/nsP2 site with low efficiency. After replication of the viral minus-strand RNAs (4 hpi), the polyproteins are cut at the nsP1/nsP2 and nsP2/nsP3 sites very efficiently, preventing accumulation of P123 and allowing the formation of the late replication complex. Post-translationally, phosphorylated by host on serines and threonines. Ubiquitinated; targets the protein for rapid degradation via the ubiquitin system. Nsp4 is present in extremely low quantities due to low frequency of translation through the amber stop-codon and the degradation by the ubiquitin pathway.

It is found in the host cytoplasmic vesicle membrane. It carries out the reaction RNA(n) + a ribonucleoside 5'-triphosphate = RNA(n+1) + diphosphate. The enzyme catalyses 4-O-(ADP-D-ribosyl)-L-aspartyl-[protein] + H2O = L-aspartyl-[protein] + ADP-D-ribose + H(+). It catalyses the reaction 5-O-(ADP-D-ribosyl)-L-glutamyl-[protein] + H2O = L-glutamyl-[protein] + ADP-D-ribose + H(+). The catalysed reaction is RNA(n) + ATP = RNA(n)-3'-adenine ribonucleotide + diphosphate. It carries out the reaction ADP-alpha-D-ribose 1''-phosphate + H2O = ADP-D-ribose + phosphate. In terms of biological role, polyprotein P1234: Inactive precursor of the viral replicase, which is activated by cleavages carried out by the viral protease nsP2. The early replication complex formed by the polyprotein P123 and nsP4 synthesizes minus-strand RNAs. As soon P123 is cleaved into mature proteins, the plus-strand RNAs synthesis begins. Functionally, the early replication complex formed by the polyprotein P123' and nsP4 synthesizes minus-strand RNAs. Polyprotein P123' is a short-lived polyprotein that accumulates during early stage of infection. As soon P123' is cleaved into mature proteins, the plus-strand RNAs synthesis begins. Its function is as follows. Seems to be essential for minus-strand RNAs and subgenomic 26S mRNAs synthesis. Displays mono-ADP-ribosylhydrolase activity. ADP-ribosylation is a post-translational modification that controls various processes of the host cell and the virus probably needs to revert it for optimal viral replication. Binds proteins of FXR family and sequesters them into the viral RNA replication complexes thereby inhibiting the formation of host stress granules on viral mRNAs. The nsp3'-FXR complexes bind viral RNAs and probably orchestrate the assembly of viral replication complexes, thanks to the ability of FXR family members to self-assemble and bind DNA. In terms of biological role, seems to be essential for minus-strand RNAs and subgenomic 26S mRNAs synthesis. Displays mono-ADP-ribosylhydrolase activity. ADP-ribosylation is a post-translational modification that controls various processes of the host cell and the virus probably needs to revert it for optimal viral replication. Binds proteins of G3BP family and sequesters them into the viral RNA replication complexes thereby inhibiting the formation of host stress granules on viral mRNAs. The nsp3-G3BP complexes bind viral RNAs and probably orchestrate the assembly of viral replication complexes, thanks to the ability of G3BP family members to self-assemble and bind DNA. RNA dependent RNA polymerase. Replicates genomic and antigenomic RNA by recognizing replications specific signals. The early replication complex formed by the polyprotein P123 and nsP4 synthesizes minus-strand RNAs. The late replication complex composed of fully processed nsP1-nsP4 is responsible for the production of genomic and subgenomic plus-strand RNAs. This Ross river virus (strain T48) (RRV) protein is Polyprotein nsP1234.